Here is a 216-residue protein sequence, read N- to C-terminus: Uracil phosphoribosyltransferase (216 aa).

Residues Arg-84, Arg-109, and 137–145 each bind 5-phospho-alpha-D-ribose 1-diphosphate; that span reads DPMLATGNT. Residues Ile-202 and 207–209 each bind uracil; that span reads GDA. Residue Asp-208 participates in 5-phospho-alpha-D-ribose 1-diphosphate binding.

This sequence belongs to the UPRTase family. The cofactor is Mg(2+).

The catalysed reaction is UMP + diphosphate = 5-phospho-alpha-D-ribose 1-diphosphate + uracil. It functions in the pathway pyrimidine metabolism; UMP biosynthesis via salvage pathway; UMP from uracil: step 1/1. Its activity is regulated as follows. Allosterically activated by GTP. Catalyzes the conversion of uracil and 5-phospho-alpha-D-ribose 1-diphosphate (PRPP) to UMP and diphosphate. This chain is Uracil phosphoribosyltransferase, found in Synechocystis sp. (strain ATCC 27184 / PCC 6803 / Kazusa).